We begin with the raw amino-acid sequence, 295 residues long: MYLRFANRKPYEKLHLSTALEDWDMSEELKLSITADQYFAGADDKVERYTLRRQHSTELSPTRSEEGDFQECKFRPSLWLVVDPNLVIPCPEWINRIPPAPELTSPPLQLQRQLSVEYSTVEDSEDEAPTSCSDLMTDDDNDDSYNPCQPKNKHKRAKCLGKKMRVQKGLTELESWARPPLNYCNLISLALRNSEDGCLNVQQIYSFVRDHFPFFRIAPDGWKNTVRHNLCFSSSFEKSSGWVCADGHRRSCLWKLTRQGRRKFRNEMHALSDDLLHVLRRSMKKPALMELMFGM.

Positions 119 to 146 (STVEDSEDEAPTSCSDLMTDDDNDDSYN) are disordered. Positions 178–275 (RPPLNYCNLI…NEMHALSDDL (98 aa)) form a DNA-binding region, fork-head.

As to expression, ubiquitously expressed in early cleavage stage and gastrula stage embryos.

It localises to the nucleus. In Xenopus laevis (African clawed frog), this protein is Forkhead box protein N5.